Here is a 334-residue protein sequence, read N- to C-terminus: HTH-type transcriptional repressor PurR (334 aa).

One can recognise an HTH lacI-type domain in the interval 2–56 (ATIKDVAKMAGVSTTTVSHVINKTRHVADETKQTVLDAIKALNYSPSAVARSLKV). Residues 4–23 (IKDVAKMAGVSTTTVSHVIN) constitute a DNA-binding region (H-T-H motif). The DNA-binding element occupies 48 to 56 (SAVARSLKV). 5 residues coordinate hypoxanthine: Tyr73, Lys189, Thr191, Phe220, and Asp274.

As to quaternary structure, homodimer.

The protein operates within purine metabolism; purine nucleotide biosynthesis [regulation]. In terms of biological role, is the main repressor of the genes involved in the de novo synthesis of purine nucleotides, regulating purB, purC, purEK, purF, purHD, purL, purMN and guaBA expression. PurR is allosterically activated to bind its cognate DNA by binding the purine corepressors, hypoxanthine or guanine, thereby effecting transcription repression. The polypeptide is HTH-type transcriptional repressor PurR (Mannheimia succiniciproducens (strain KCTC 0769BP / MBEL55E)).